Reading from the N-terminus, the 201-residue chain is Syndecan-2 (201 aa).

Residues 1-18 (MRRAWILLTLGLVACVSA) form the signal peptide. Residues 19-144 (ESRAELTSDK…HSDSLFKRTE (126 aa)) are Extracellular-facing. O-linked (Xyl...) (glycosaminoglycan) serine glycans are attached at residues Ser41, Ser55, and Ser57. Disordered regions lie at residues 42-70 (GVYP…ELTT) and 90-130 (TLNI…DTNV). The span at 90–102 (TLNIQNKIPAQTK) shows a compositional bias: polar residues. O-linked (GalNAc...) threonine glycosylation is present at Thr101. The segment covering 103–123 (SPEETDKEKVHLSDSERKMDP) has biased composition (basic and acidic residues). Ser115 bears the Phosphoserine; by FAM20C mark. A helical transmembrane segment spans residues 145 to 169 (VLAAVIAGGVIGFLFAIFLILLLVY). At 170–201 (RMRKKDEGSYDLGERKPSSAAYQKAPTKEFYA) the chain is on the cytoplasmic side. The disordered stretch occupies residues 178–201 (SYDLGERKPSSAAYQKAPTKEFYA). The residue at position 187 (Ser187) is a Phosphoserine.

The protein belongs to the syndecan proteoglycan family. In terms of assembly, interacts (via cytoplasmic domain) with SARM1. Forms a complex with SDCBP and PDCD6IP. Post-translationally, O-glycosylated with core 1 or possibly core 8 glycans. Contains heparan sulfate. Also contains chondroitin sulfate.

The protein resides in the membrane. Functionally, cell surface proteoglycan which regulates dendritic arbor morphogenesis. The sequence is that of Syndecan-2 (SDC2) from Homo sapiens (Human).